The sequence spans 201 residues: Recombination protein RecR (201 aa).

Residues 57 to 72 (CADCRTFTEQEVCNIC) form a C4-type zinc finger. Residues 81-176 (GQICVVESPA…EASRIAHGVP (96 aa)) form the Toprim domain.

It belongs to the RecR family.

Its function is as follows. May play a role in DNA repair. It seems to be involved in an RecBC-independent recombinational process of DNA repair. It may act with RecF and RecO. This chain is Recombination protein RecR, found in Salmonella arizonae (strain ATCC BAA-731 / CDC346-86 / RSK2980).